The sequence spans 264 residues: Proliferating cell nuclear antigen 2 (264 aa).

A DNA-binding region spans residues 61–80 (RCDRNLSMGMNLGNMSKMLK).

Belongs to the PCNA family. In terms of assembly, homo- and heterotrimer. Interacts with POLH, ATXR5 and ATXR6.

The protein localises to the nucleus. In terms of biological role, this protein is an auxiliary protein of DNA polymerase delta and is involved in the control of eukaryotic DNA replication by increasing the polymerase's processibility during elongation of the leading strand. May be involved in UV resistance. The chain is Proliferating cell nuclear antigen 2 (PCNA2) from Arabidopsis thaliana (Mouse-ear cress).